Reading from the N-terminus, the 61-residue chain is Ubiquinol-cytochrome c reductase complex assembly factor 6 (61 aa).

The Mitochondrial matrix portion of the chain corresponds to 1–9 (MPAGVSWGQ). The helical transmembrane segment at 10 to 32 (YLKFLGCALASMMAGSQAVHLYY) threads the bilayer. The Mitochondrial intermembrane portion of the chain corresponds to 33-61 (KPLEDLRVYIEQEQHSTQVDPTAKPPESA).

This sequence belongs to the UQCC6 family. As to quaternary structure, interacts with sloth1; the interaction stabilizes both components. As to expression, expressed in the brain.

Its subcellular location is the mitochondrion inner membrane. The protein resides in the mitochondrion. Functionally, required for the assembly and stability of the mitochondrial ubiquinol-cytochrome c reductase complex (complex III (CIII) or cytochrome b-c1 complex), a multisubunit transmembrane complex that is part of the mitochondrial electron transport chain (ETC) which drives oxidative phosphorylation. This Drosophila melanogaster (Fruit fly) protein is Ubiquinol-cytochrome c reductase complex assembly factor 6.